A 695-amino-acid chain; its full sequence is Scarecrow-like protein 31 (695 aa).

Disordered regions lie at residues 105–136 and 234–260; these read VISDSQTQSSIPNNSITTSSSSNSGDYSNSSN and ISKTRKNHHEREEEEDDLEEARRRSKQ. Over residues 113-136 the composition is skewed to low complexity; it reads SSIPNNSITTSSSSNSGDYSNSSN. The stretch at 233-266 forms a coiled coil; it reads AISKTRKNHHEREEEEDDLEEARRRSKQFAVNEE. A GRAS domain is found at 306–693; that stretch reads AKKKSRAVDF…RILFSSSCWV (388 aa). The segment at 313 to 377 is leucine repeat I (LRI); sequence VDFRTLLTLC…EGSTGTMIQS (65 aa). Residues 396 to 461 form a VHIID region; sequence YSVFLSASPF…PGLRKLRITG (66 aa). Residues 427–431 carry the VHIID motif; the sequence is LHIVD. The interval 477–509 is leucine repeat II (LRII); it reads DTGRRLTEYCKRFGVPFEYNAIASKNWETIKME. The PFYRE stretch occupies residues 519–614; that stretch reads LAVNAVLRFK…GEFYGREVMN (96 aa). Residues 617 to 693 form an SAW region; sequence ACEGVDRVER…RILFSSSCWV (77 aa).

This sequence belongs to the GRAS family. As to expression, expressed in seedlings, roots, cotyledons, leaves and sepals.

The protein resides in the nucleus. Functionally, probable transcription factor involved in plant development. This Arabidopsis thaliana (Mouse-ear cress) protein is Scarecrow-like protein 31 (SCL31).